The following is a 287-amino-acid chain: Elongation factor Ts (287 aa).

The segment at 80 to 83 (TDFL) is involved in Mg(2+) ion dislocation from EF-Tu.

Belongs to the EF-Ts family.

The protein localises to the cytoplasm. Functionally, associates with the EF-Tu.GDP complex and induces the exchange of GDP to GTP. It remains bound to the aminoacyl-tRNA.EF-Tu.GTP complex up to the GTP hydrolysis stage on the ribosome. This Pseudomonas syringae pv. syringae (strain B728a) protein is Elongation factor Ts.